The sequence spans 607 residues: Developmental gene 1062 protein (607 aa).

Disordered stretches follow at residues 62–84, 334–451, and 568–602; these read LQGQ…HNNQ, ICDD…SNFQ, and DNNT…NDLL. Over residues 334–363 the composition is skewed to low complexity; it reads ICDDSSNSSTPSLSSYSNGNNKYNNNNNDS. Acidic residues predominate over residues 364–382; the sequence is SESDESDDDDNNDDDDNDS. Composition is skewed to low complexity over residues 383–451 and 568–582; these read IDFN…SNFQ and DNNT…ISVN.

This chain is Developmental gene 1062 protein (DG1062), found in Dictyostelium discoideum (Social amoeba).